Reading from the N-terminus, the 30-residue chain is Conotoxin Bt12.1 (30 aa).

In terms of processing, contains 3 disulfide bonds. Expressed by the venom duct.

Its subcellular location is the secreted. This Conus betulinus (Beech cone) protein is Conotoxin Bt12.1.